Reading from the N-terminus, the 327-residue chain is Undecaprenyl-phosphate 4-deoxy-4-formamido-L-arabinose transferase (327 aa).

The Cytoplasmic segment spans residues 1–235 (MFDAAPIKKV…TCLTTTPLRL (235 aa)). A helical transmembrane segment spans residues 236–256 (LSLLGSVIAIGGFSLSVLLIV). The Periplasmic portion of the chain corresponds to 257-269 (LRLALGPQWAAEG). Residues 270–290 (VFMLFAVLFTFIGAQFIGMGL) form a helical membrane-spanning segment. Topologically, residues 291–327 (LGEYIGRIYNDVRARPRYFVQQVIYPESTPFTEESHQ) are cytoplasmic.

Belongs to the glycosyltransferase 2 family.

The protein localises to the cell inner membrane. It carries out the reaction UDP-4-deoxy-4-formamido-beta-L-arabinose + di-trans,octa-cis-undecaprenyl phosphate = 4-deoxy-4-formamido-alpha-L-arabinopyranosyl di-trans,octa-cis-undecaprenyl phosphate + UDP. It functions in the pathway glycolipid biosynthesis; 4-amino-4-deoxy-alpha-L-arabinose undecaprenyl phosphate biosynthesis; 4-amino-4-deoxy-alpha-L-arabinose undecaprenyl phosphate from UDP-4-deoxy-4-formamido-beta-L-arabinose and undecaprenyl phosphate: step 1/2. It participates in bacterial outer membrane biogenesis; lipopolysaccharide biosynthesis. Functionally, catalyzes the transfer of 4-deoxy-4-formamido-L-arabinose from UDP to undecaprenyl phosphate. The modified arabinose is attached to lipid A and is required for resistance to polymyxin and cationic antimicrobial peptides. In Salmonella choleraesuis (strain SC-B67), this protein is Undecaprenyl-phosphate 4-deoxy-4-formamido-L-arabinose transferase.